Consider the following 711-residue polypeptide: 1,4-alpha-glucan-branching enzyme (711 aa).

(1,4-alpha-D-glucosyl)n is bound by residues tryptophan 98 and lysine 135. Residue aspartate 353 is the Nucleophile of the active site. The Proton donor role is filled by glutamate 414.

It belongs to the glycosyl hydrolase 13 family. GlgB subfamily.

The protein localises to the cytoplasm. The catalysed reaction is Transfers a segment of a (1-&gt;4)-alpha-D-glucan chain to a primary hydroxy group in a similar glucan chain.. It participates in glycan biosynthesis; glycogen biosynthesis. Its function is as follows. Glycogen-branching enzyme participates in the glycogen biosynthetic process along with glycogenin and glycogen synthase. Generates alpha-1,6-glucosidic branches from alpha-1,4-linked glucose chains, to increase solubility of the glycogen polymer. This Debaryomyces hansenii (strain ATCC 36239 / CBS 767 / BCRC 21394 / JCM 1990 / NBRC 0083 / IGC 2968) (Yeast) protein is 1,4-alpha-glucan-branching enzyme (GLC3).